An 876-amino-acid polypeptide reads, in one-letter code: DNA polymerase 1 (876 aa).

This sequence belongs to the DNA polymerase type-B family.

It carries out the reaction DNA(n) + a 2'-deoxyribonucleoside 5'-triphosphate = DNA(n+1) + diphosphate. This polymerase possesses two enzymatic activities: DNA synthesis (polymerase) and an exonucleolytic activity that degrades single-stranded DNA in the 3'- to 5'-direction. This Sulfolobus acidocaldarius (strain ATCC 33909 / DSM 639 / JCM 8929 / NBRC 15157 / NCIMB 11770) protein is DNA polymerase 1 (dpo1).